The following is a 169-amino-acid chain: Thermonuclease (169 aa).

Positions 1-26 (MKKITTGLIIVVAAIIVLSIQFMTES) are cleaved as a signal peptide. Catalysis depends on residues Arg65, Glu73, and Arg115.

The protein belongs to the thermonuclease family. Ca(2+) serves as cofactor.

The protein resides in the secreted. It carries out the reaction Endonucleolytic cleavage to nucleoside 3'-phosphates and 3'-phosphooligonucleotide end-products.. Enzyme that catalyzes the hydrolysis of both DNA and RNA at the 5'-position of the phosphodiester bond. The protein is Thermonuclease (nucH) of Staphylococcus hyicus.